The primary structure comprises 68 residues: Guanine nucleotide-binding protein G(I)/G(S)/G(O) subunit gamma-5 (68 aa).

Serine 2 is subject to N-acetylserine. Serine 2 carries the phosphoserine modification. Cysteine 65 carries the post-translational modification Cysteine methyl ester. Residue cysteine 65 is the site of S-geranylgeranyl cysteine attachment. A propeptide spans 66-68 (SFL) (removed in mature form).

The protein belongs to the G protein gamma family. As to quaternary structure, g proteins are composed of 3 units, alpha, beta and gamma. Expressed in a variety of tissues.

It is found in the cell membrane. In terms of biological role, guanine nucleotide-binding proteins (G proteins) are involved as a modulator or transducer in various transmembrane signaling systems. The beta and gamma chains are required for the GTPase activity, for replacement of GDP by GTP, and for G protein-effector interaction. The polypeptide is Guanine nucleotide-binding protein G(I)/G(S)/G(O) subunit gamma-5 (GNG5) (Bos taurus (Bovine)).